A 597-amino-acid polypeptide reads, in one-letter code: Dictomallein-3 (597 aa).

The N-terminal stretch at 1 to 19 (MKLILILIFLFSCILFINC) is a signal peptide. The Peptidase M66 domain occupies 148–409 (PDVGQDYTLK…QNYFKNSIYY (262 aa)). His301 is a binding site for Zn(2+). Residue Glu302 is part of the active site. Zn(2+) is bound by residues His305 and His311.

Belongs to the dictomallein family. Zn(2+) serves as cofactor.

Its subcellular location is the secreted. The chain is Dictomallein-3 (dtmlC) from Dictyostelium discoideum (Social amoeba).